We begin with the raw amino-acid sequence, 409 residues long: 8-amino-7-oxononanoate synthase (409 aa).

Residue arginine 20 coordinates substrate. 116-117 (GY) provides a ligand contact to pyridoxal 5'-phosphate. Histidine 141 serves as a coordination point for substrate. 3 residues coordinate pyridoxal 5'-phosphate: serine 187, histidine 215, and threonine 243. Residue lysine 246 is modified to N6-(pyridoxal phosphate)lysine. Residue threonine 369 participates in substrate binding.

It belongs to the class-II pyridoxal-phosphate-dependent aminotransferase family. BioF subfamily. As to quaternary structure, homodimer. It depends on pyridoxal 5'-phosphate as a cofactor.

It catalyses the reaction 6-carboxyhexanoyl-[ACP] + L-alanine + H(+) = (8S)-8-amino-7-oxononanoate + holo-[ACP] + CO2. Its pathway is cofactor biosynthesis; biotin biosynthesis. Catalyzes the decarboxylative condensation of pimeloyl-[acyl-carrier protein] and L-alanine to produce 8-amino-7-oxononanoate (AON), [acyl-carrier protein], and carbon dioxide. This Polaromonas naphthalenivorans (strain CJ2) protein is 8-amino-7-oxononanoate synthase.